The chain runs to 459 residues: Cysteine--tRNA ligase (459 aa).

Cys-28 provides a ligand contact to Zn(2+). A 'HIGH' region motif is present at residues 30–40; the sequence is VTIYDLCHIGH. The Zn(2+) site is built by Cys-209, His-234, and Glu-238. Positions 266-270 match the 'KMSKS' region motif; the sequence is KMSKS. Residue Lys-269 coordinates ATP.

This sequence belongs to the class-I aminoacyl-tRNA synthetase family. Monomer. Requires Zn(2+) as cofactor.

The protein localises to the cytoplasm. The catalysed reaction is tRNA(Cys) + L-cysteine + ATP = L-cysteinyl-tRNA(Cys) + AMP + diphosphate. This Shewanella pealeana (strain ATCC 700345 / ANG-SQ1) protein is Cysteine--tRNA ligase.